A 551-amino-acid chain; its full sequence is MLFSRSILRGMPKAGIPKSPLALSASRNLRLANSVRFASDAASSPKSTTSKWKILKRTTLGLFATAVVLYGANVYRFRHPDPHQPLPDPSKKTLVVLGAGWGATSILRTIDTSLFNVIVVSPRNYFLFTSLLPSTATGSVHTRSIVQPIRYMLRHKSCYVKFYEAECTDVDADKKVIHIKKTTTDGVDLEQEIKYDYLVCSHGAETQTFNIPGIAEYGCFLKEIWDAQKIRARILHCLEQAQFKDLPAETRRRYVHTVVVGGGPTGMEFAGEMADFIEDDLKSWYPELADDFAVTLVEALPSVLPMFSAKLRDYTQSLFDSSHIKIRTNTALKKVTAENIHVEVKNPDGSKQEEVIPYGLLVWAGGNRARPLTKKLMEGSEEQNNRRGLVVDEYLKLKGYKDIFALGDCTHTAYAPTAQVASQQGAYLGQLFNKLGSLNFEKPSEDRHIALGDEMDSSTLISLANEKHASTKVFLPFKYSHQGSLAYVGHEKAIADIEVPWFGKQLHASGALAFYFWRSVYLSELYSLRNRTNVTLDWIRVKLFGRDISSL.

The N-terminal 37 residues, 1 to 37 (MLFSRSILRGMPKAGIPKSPLALSASRNLRLANSVRF), are a transit peptide targeting the mitochondrion. Residue 93–123 (TLVVLGAGWGATSILRTIDTSLFNVIVVSPR) participates in FAD binding. 255–291 (VHTVVVGGGPTGMEFAGEMADFIEDDLKSWYPELADD) is a binding site for NAD(+).

It belongs to the NADH dehydrogenase family.

Its subcellular location is the mitochondrion. It carries out the reaction a quinone + NADH + H(+) = a quinol + NAD(+). The enzyme catalyses a ubiquinone + NADH + H(+) = a ubiquinol + NAD(+). Catalyzes the oxidation of NADH. This chain is Probable NADH-ubiquinone oxidoreductase C3A11.07, mitochondrial, found in Schizosaccharomyces pombe (strain 972 / ATCC 24843) (Fission yeast).